We begin with the raw amino-acid sequence, 222 residues long: 7-cyano-7-deazaguanine synthase (222 aa).

Position 7–17 (7–17) interacts with ATP; it reads LSGGLDSSTVL. Residues Cys-191, Cys-199, Cys-202, and Cys-205 each contribute to the Zn(2+) site.

This sequence belongs to the QueC family. Zn(2+) is required as a cofactor.

The enzyme catalyses 7-carboxy-7-deazaguanine + NH4(+) + ATP = 7-cyano-7-deazaguanine + ADP + phosphate + H2O + H(+). It participates in purine metabolism; 7-cyano-7-deazaguanine biosynthesis. In terms of biological role, catalyzes the ATP-dependent conversion of 7-carboxy-7-deazaguanine (CDG) to 7-cyano-7-deazaguanine (preQ(0)). This Trichodesmium erythraeum (strain IMS101) protein is 7-cyano-7-deazaguanine synthase.